The primary structure comprises 226 residues: Movement and silencing protein TGBp1 (226 aa).

One can recognise a (+)RNA virus helicase ATP-binding domain in the interval Met-1–Thr-138. A (+)RNA virus helicase C-terminal domain is found at Asn-139 to Ala-226.

This sequence belongs to the Tymovirales TGBp1 protein family. As to quaternary structure, homodimer and homooligomer. Interacts with capsid protein. Interacts with host AGO1; this interaction targets the host protein for degradation, thereby suppressing the antiviral RNA silencing.

The protein resides in the host cytoplasm. Functionally, transports viral genome to neighboring plant cells directly through plasmosdesmata, without any budding. The movement protein allows efficient cell to cell propagation, by bypassing the host cell wall barrier. Increases plasmodesma size exclusion limit. Acts as a suppressor of RNA-mediated gene silencing, also known as post-transcriptional gene silencing (PTGS), a mechanism of plant viral defense that limits the accumulation of viral RNAs. This chain is Movement and silencing protein TGBp1, found in Brassica campestris (Field mustard).